The sequence spans 312 residues: Olfactory receptor 7G3 (312 aa).

The Extracellular portion of the chain corresponds to 1–25 (MKAGNFSDTPEFFLLGLSGDPELQP). Asn5 carries an N-linked (GlcNAc...) asparagine glycan. Residues 26–46 (ILFMLFLSMYLATMLGNLLII) form a helical membrane-spanning segment. Residues 47–54 (LAVNSDSH) are Cytoplasmic-facing. A helical transmembrane segment spans residues 55-75 (LHTPMYFLLSILSLVDICFTS). Over 76–99 (TTMPKMLVNIQAQAQSINYTGCLT) the chain is Extracellular. Asn93 is a glycosylation site (N-linked (GlcNAc...) asparagine). Cys97 and Cys189 are oxidised to a cystine. Residues 100–120 (QICFVLVFVGLENGILVMMAY) traverse the membrane as a helical segment. At 121 to 139 (DRFVAICHPLRYNVIMNPK) the chain is on the cytoplasmic side. The helical transmembrane segment at 140–160 (LCGLLLLLSFIVSVLDALLHT) threads the bilayer. Topologically, residues 161–197 (LMVLQLTFCIDLEIPHFFCELAHILKLACSDVLINNI) are extracellular. Residues 198 to 217 (LVYLVTSLLGVVPLSGIIFS) form a helical membrane-spanning segment. Residues 218–237 (YTRIVSSVMKIPSAGGKYKA) are Cytoplasmic-facing. A helical membrane pass occupies residues 238 to 258 (FSICGSHLIVVSLFYGTGFGV). The Extracellular portion of the chain corresponds to 259-271 (YLSSGATHSSRKG). Residues 272 to 292 (AIASVMYTVVTPMLNPLIYSL) form a helical membrane-spanning segment. Topologically, residues 293-312 (RNKDMLKALRKLISRIPSFH) are cytoplasmic.

Belongs to the G-protein coupled receptor 1 family.

Its subcellular location is the cell membrane. Functionally, odorant receptor. This is Olfactory receptor 7G3 (OR7G3) from Homo sapiens (Human).